We begin with the raw amino-acid sequence, 937 residues long: Isoleucine--tRNA ligase (937 aa).

A 'HIGH' region motif is present at residues 58-68 (PYANGHIHLGT). An L-isoleucyl-5'-AMP-binding site is contributed by Glu-566. The 'KMSKS' region signature appears at 607–611 (KMSKS). Residue Lys-610 coordinates ATP. 4 residues coordinate Zn(2+): Cys-906, Cys-909, Cys-925, and Cys-928.

It belongs to the class-I aminoacyl-tRNA synthetase family. IleS type 1 subfamily. In terms of assembly, monomer. It depends on Zn(2+) as a cofactor.

Its subcellular location is the cytoplasm. The enzyme catalyses tRNA(Ile) + L-isoleucine + ATP = L-isoleucyl-tRNA(Ile) + AMP + diphosphate. Functionally, catalyzes the attachment of isoleucine to tRNA(Ile). As IleRS can inadvertently accommodate and process structurally similar amino acids such as valine, to avoid such errors it has two additional distinct tRNA(Ile)-dependent editing activities. One activity is designated as 'pretransfer' editing and involves the hydrolysis of activated Val-AMP. The other activity is designated 'posttransfer' editing and involves deacylation of mischarged Val-tRNA(Ile). The polypeptide is Isoleucine--tRNA ligase (Lawsonia intracellularis (strain PHE/MN1-00)).